Consider the following 288-residue polypeptide: CUF1-dependent copper transporter 1 (288 aa).

The N-linked (GlcNAc...) asparagine glycan is linked to Asn18. A helical transmembrane segment spans residues 42-62 (MPSSAGATVGVCIGLFILAIF). Disordered regions lie at residues 106–125 (PVLF…YNPL) and 154–180 (RESQ…GSGV). Polar residues predominate over residues 158–167 (EGSSAPSYAH). The segment covering 168–177 (SQQGQAQAQG) has biased composition (low complexity). A helical transmembrane segment spans residues 251-271 (LLMLVVMTFNIWWMISVVIGC).

Belongs to the copper transporter (Ctr) (TC 1.A.56) family. SLC31A subfamily. In terms of assembly, interacts with the copper acquisition factor BIM1.

It localises to the cell membrane. In terms of biological role, high affinity copper transporter involved in Cu(+) import into the cell upon copper-limitating conditions. Functions with BIM1 and probably also FRE4 and FRE7, where FRE4 and FRE7 metalloreductases liberate the Cu(2+) bound to the BIM1 copper-binding site for subsequent import of Cu(+) into the cell by CTR1, via the reduction of BIM1-bound Cu(2+) to Cu(+) to reduce binding affinity for BIM1 but increase affinity for CTR1. The BIM1-CTR1 pathway for copper uptake plays a key role in colonization in the brain where copper amounts are low and thus in cryptococcal meningitis. This chain is CUF1-dependent copper transporter 1, found in Cryptococcus neoformans var. grubii serotype A (strain H99 / ATCC 208821 / CBS 10515 / FGSC 9487) (Filobasidiella neoformans var. grubii).